The following is a 491-amino-acid chain: Probable cytosol aminopeptidase (491 aa).

Positions 261 and 266 each coordinate Mn(2+). Residue K273 is part of the active site. Residues D284, D343, and E345 each contribute to the Mn(2+) site. R347 is a catalytic residue.

Belongs to the peptidase M17 family. Requires Mn(2+) as cofactor.

Its subcellular location is the cytoplasm. It catalyses the reaction Release of an N-terminal amino acid, Xaa-|-Yaa-, in which Xaa is preferably Leu, but may be other amino acids including Pro although not Arg or Lys, and Yaa may be Pro. Amino acid amides and methyl esters are also readily hydrolyzed, but rates on arylamides are exceedingly low.. It carries out the reaction Release of an N-terminal amino acid, preferentially leucine, but not glutamic or aspartic acids.. Presumably involved in the processing and regular turnover of intracellular proteins. Catalyzes the removal of unsubstituted N-terminal amino acids from various peptides. The polypeptide is Probable cytosol aminopeptidase (Geobacter sp. (strain M21)).